A 192-amino-acid chain; its full sequence is Leucyl/phenylalanyl-tRNA--protein transferase (192 aa).

The protein belongs to the L/F-transferase family.

It localises to the cytoplasm. The catalysed reaction is N-terminal L-lysyl-[protein] + L-leucyl-tRNA(Leu) = N-terminal L-leucyl-L-lysyl-[protein] + tRNA(Leu) + H(+). It carries out the reaction N-terminal L-arginyl-[protein] + L-leucyl-tRNA(Leu) = N-terminal L-leucyl-L-arginyl-[protein] + tRNA(Leu) + H(+). It catalyses the reaction L-phenylalanyl-tRNA(Phe) + an N-terminal L-alpha-aminoacyl-[protein] = an N-terminal L-phenylalanyl-L-alpha-aminoacyl-[protein] + tRNA(Phe). Functions in the N-end rule pathway of protein degradation where it conjugates Leu, Phe and, less efficiently, Met from aminoacyl-tRNAs to the N-termini of proteins containing an N-terminal arginine or lysine. The polypeptide is Leucyl/phenylalanyl-tRNA--protein transferase (Synechococcus sp. (strain JA-3-3Ab) (Cyanobacteria bacterium Yellowstone A-Prime)).